We begin with the raw amino-acid sequence, 490 residues long: POC1 centriolar protein homolog B (490 aa).

WD repeat units lie at residues 16–55 (GHKDVISCADFNPNNKQLATGSCDKSLMIWNLAPKARAFR), 58–97 (GHTDVITGVNFAPSGSLVASSSRDQTVRLWTPSIKGESTV), 100–139 (AHTASVRSVHFSRDGQRLVTASDDKSVKVWGVERKKFLYS), 142–181 (RHTNWVRCARFSPDGRLIASCGDDRTVRLWDTSSHQCINI), 184–223 (DYGGSATFVDFNSSGTCIASSGADNTIKIWDIRTNKLIQH), 226–265 (VHNAGVNCFSFHPSGNYLISGSSDSTIKILDLLEGRLIYT), and 268–307 (GHKGPVLTVTFSRDGDLFASGGADSQVLMWKTNFDSLNYR). The segment covering 375 to 388 (DGASSSRAQFTSGM) has biased composition (polar residues). A disordered region spans residues 375–427 (DGASSSRAQFTSGMDSGPFRTHTQAREEEDENQEERFAGGMTASPAERSGIPS). Residues 431–463 (STLENIVQQLDILTQTVAVLEERLTLTEDKLRT) are a coiled coil.

Belongs to the WD repeat POC1 family.

It is found in the cytoplasm. The protein localises to the cytoskeleton. It localises to the microtubule organizing center. The protein resides in the centrosome. Its subcellular location is the centriole. Plays an important role in centriole assembly and/or stability and ciliogenesis. Involved in early steps of centriole duplication, as well as in the later steps of centriole length control. This Danio rerio (Zebrafish) protein is POC1 centriolar protein homolog B.